The chain runs to 409 residues: Elongation factor Tu, chloroplastic (409 aa).

The tr-type G domain maps to 10 to 214; that stretch reads KPHVNIGTIG…KIDEYIPTPE (205 aa). The segment at 19–26 is G1; that stretch reads GHVDHGKT. Residue 19–26 participates in GTP binding; sequence GHVDHGKT. Residue T26 coordinates Mg(2+). The G2 stretch occupies residues 60–64; it reads GITIN. The tract at residues 81 to 84 is G3; it reads DCPG. Residues 81 to 85 and 136 to 139 contribute to the GTP site; these read DCPGH and NKAD. Residues 136 to 139 are G4; that stretch reads NKAD. A G5 region spans residues 174–176; that stretch reads SAL.

It belongs to the TRAFAC class translation factor GTPase superfamily. Classic translation factor GTPase family. EF-Tu/EF-1A subfamily.

The protein localises to the plastid. It is found in the chloroplast. It catalyses the reaction GTP + H2O = GDP + phosphate + H(+). In terms of biological role, GTP hydrolase that promotes the GTP-dependent binding of aminoacyl-tRNA to the A-site of ribosomes during protein biosynthesis. The chain is Elongation factor Tu, chloroplastic (tufA) from Rhodomonas salina (Cryptomonas salina).